We begin with the raw amino-acid sequence, 184 residues long: Myosin regulatory light chain 1 (184 aa).

The tract at residues 1–29 (MFSSKENSLGAKRAPFSSNTTSSQRVAAQ) is disordered. Ser-36 carries the phosphoserine modification. EF-hand domains are found at residues 45–80 (SQIQ…LNQD) and 114–149 (SPRN…MGDR). Ca(2+) is bound by residues Asp-58, Asp-60, Asp-62, Asn-64, and Asp-69.

As to quaternary structure, binds to myosin II chains myo2 and myo3.

The protein resides in the cytoplasm. This Schizosaccharomyces pombe (strain 972 / ATCC 24843) (Fission yeast) protein is Myosin regulatory light chain 1 (rlc1).